The primary structure comprises 269 residues: MTFALAYPHIDPIALQIGPIAIRWYALAYIAGLMLGWRYVKFLVARPPNAMTELEVDDFLVWATMGVVLGGRLGYVLFYKPLYYLENPLEIPMVWQGGMSFHGGALGVIVGIIAFSRFRGRNLFQVGDVICCAVPIGLFFGRIANFVNGELFGRVAPDVDWAMVFPGGGPLPRHPSQLYEAGLEGAVLFLVLFGLWRLTGIRHRAGALSGVFLAGYGLARIASEFFRQPDAHLGFLWGGATMGQLLSIPQVLVGLALLAWALRRGAKAA.

Transmembrane regions (helical) follow at residues Ile17–Trp37, Phe59–Tyr79, Trp95–Phe115, Leu123–Ile143, Ala181–Ile201, Gly206–Phe226, and Met242–Leu262. Arg142 is an a 1,2-diacyl-sn-glycero-3-phospho-(1'-sn-glycerol) binding site.

This sequence belongs to the Lgt family.

It localises to the cell inner membrane. It catalyses the reaction L-cysteinyl-[prolipoprotein] + a 1,2-diacyl-sn-glycero-3-phospho-(1'-sn-glycerol) = an S-1,2-diacyl-sn-glyceryl-L-cysteinyl-[prolipoprotein] + sn-glycerol 1-phosphate + H(+). It functions in the pathway protein modification; lipoprotein biosynthesis (diacylglyceryl transfer). Catalyzes the transfer of the diacylglyceryl group from phosphatidylglycerol to the sulfhydryl group of the N-terminal cysteine of a prolipoprotein, the first step in the formation of mature lipoproteins. This Paramagnetospirillum magneticum (strain ATCC 700264 / AMB-1) (Magnetospirillum magneticum) protein is Phosphatidylglycerol--prolipoprotein diacylglyceryl transferase.